The sequence spans 448 residues: Deoxyguanosinetriphosphate triphosphohydrolase-like protein (448 aa).

One can recognise an HD domain in the interval 67–260 (RLTHSLEVSQ…MELADDIAYG (194 aa)).

This sequence belongs to the dGTPase family. Type 2 subfamily.

This is Deoxyguanosinetriphosphate triphosphohydrolase-like protein from Aliivibrio salmonicida (strain LFI1238) (Vibrio salmonicida (strain LFI1238)).